The following is a 118-amino-acid chain: U16-barytoxin-Tl1c (118 aa).

The signal sequence occupies residues 1–16; that stretch reads MKTIIVFLSFLVLVLA. The propeptide occupies 17–76; it reads TKFGDANEGVNREQTKEVIQNEFRGDFLNEMAAMSLLQQLEAIESALLEKEADRNSRQKR. 3 disulfide bridges follow: cysteine 77–cysteine 92, cysteine 84–cysteine 97, and cysteine 91–cysteine 112.

The protein belongs to the neurotoxin 14 (magi-1) family. 06 (ICK-Trit) subfamily. As to expression, expressed by the venom gland.

The protein resides in the secreted. Functionally, ion channel inhibitor. The chain is U16-barytoxin-Tl1c from Trittame loki (Brush-footed trapdoor spider).